Reading from the N-terminus, the 105-residue chain is Malonate decarboxylase acyl carrier protein (105 aa).

At Ser-28 the chain carries O-(phosphoribosyl dephospho-coenzyme A)serine.

It belongs to the MdcC family. Post-translationally, covalently binds the prosthetic group of malonate decarboxylase.

The protein resides in the cytoplasm. In terms of biological role, subunit of malonate decarboxylase, it is an acyl carrier protein to which acetyl and malonyl thioester residues are bound via a 2'-(5''-phosphoribosyl)-3'-dephospho-CoA prosthetic group and turn over during the catalytic mechanism. The sequence is that of Malonate decarboxylase acyl carrier protein from Bradyrhizobium diazoefficiens (strain JCM 10833 / BCRC 13528 / IAM 13628 / NBRC 14792 / USDA 110).